A 382-amino-acid chain; its full sequence is Chaperone protein DnaJ (382 aa).

Residues 5-70 (DYYETLGVSR…NKRAAYDRYG (66 aa)) enclose the J domain. Residues 140 to 218 (GKTAQIRVPT…CHGQGRITEE (79 aa)) form a CR-type zinc finger. The Zn(2+) site is built by cysteine 153, cysteine 156, cysteine 170, cysteine 173, cysteine 192, cysteine 195, cysteine 206, and cysteine 209. CXXCXGXG motif repeat units follow at residues 153–160 (CDVCSGSG), 170–177 (CGTCQGSG), 192–199 (CPTCHGRG), and 206–213 (CGKCHGQG).

This sequence belongs to the DnaJ family. As to quaternary structure, homodimer. Zn(2+) serves as cofactor.

It is found in the cytoplasm. Functionally, participates actively in the response to hyperosmotic and heat shock by preventing the aggregation of stress-denatured proteins and by disaggregating proteins, also in an autonomous, DnaK-independent fashion. Unfolded proteins bind initially to DnaJ; upon interaction with the DnaJ-bound protein, DnaK hydrolyzes its bound ATP, resulting in the formation of a stable complex. GrpE releases ADP from DnaK; ATP binding to DnaK triggers the release of the substrate protein, thus completing the reaction cycle. Several rounds of ATP-dependent interactions between DnaJ, DnaK and GrpE are required for fully efficient folding. Also involved, together with DnaK and GrpE, in the DNA replication of plasmids through activation of initiation proteins. This is Chaperone protein DnaJ from Rhizobium rhizogenes (strain K84 / ATCC BAA-868) (Agrobacterium radiobacter).